Consider the following 416-residue polypeptide: 3-isopropylmalate dehydratase large subunit (416 aa).

Positions 299, 357, and 360 each coordinate [4Fe-4S] cluster.

Belongs to the aconitase/IPM isomerase family. LeuC type 2 subfamily. As to quaternary structure, heterodimer of LeuC and LeuD. [4Fe-4S] cluster is required as a cofactor.

The catalysed reaction is (2R,3S)-3-isopropylmalate = (2S)-2-isopropylmalate. It participates in amino-acid biosynthesis; L-leucine biosynthesis; L-leucine from 3-methyl-2-oxobutanoate: step 2/4. Functionally, catalyzes the isomerization between 2-isopropylmalate and 3-isopropylmalate, via the formation of 2-isopropylmaleate. This chain is 3-isopropylmalate dehydratase large subunit, found in Saccharolobus solfataricus (strain ATCC 35092 / DSM 1617 / JCM 11322 / P2) (Sulfolobus solfataricus).